We begin with the raw amino-acid sequence, 362 residues long: Phosphoserine aminotransferase (362 aa).

Residues Ser-9 and Arg-42 each contribute to the L-glutamate site. Residues 76 to 77 (GR), Trp-102, Thr-153, Asp-174, and Gln-197 each bind pyridoxal 5'-phosphate. Lys-198 carries the N6-(pyridoxal phosphate)lysine modification. 239-240 (NT) lines the pyridoxal 5'-phosphate pocket.

The protein belongs to the class-V pyridoxal-phosphate-dependent aminotransferase family. SerC subfamily. As to quaternary structure, homodimer. Pyridoxal 5'-phosphate serves as cofactor.

Its subcellular location is the cytoplasm. It carries out the reaction O-phospho-L-serine + 2-oxoglutarate = 3-phosphooxypyruvate + L-glutamate. The catalysed reaction is 4-(phosphooxy)-L-threonine + 2-oxoglutarate = (R)-3-hydroxy-2-oxo-4-phosphooxybutanoate + L-glutamate. The protein operates within amino-acid biosynthesis; L-serine biosynthesis; L-serine from 3-phospho-D-glycerate: step 2/3. It functions in the pathway cofactor biosynthesis; pyridoxine 5'-phosphate biosynthesis; pyridoxine 5'-phosphate from D-erythrose 4-phosphate: step 3/5. In terms of biological role, catalyzes the reversible conversion of 3-phosphohydroxypyruvate to phosphoserine and of 3-hydroxy-2-oxo-4-phosphonooxybutanoate to phosphohydroxythreonine. Is involved in both pyridoxine and serine biosynthesis. This chain is Phosphoserine aminotransferase (serC), found in Escherichia coli (strain K12).